The following is a 291-amino-acid chain: Ribonuclease Z (291 aa).

Zn(2+) is bound by residues histidine 60, histidine 62, aspartate 64, histidine 65, histidine 132, aspartate 200, and histidine 256. The active-site Proton acceptor is aspartate 64.

Belongs to the RNase Z family. In terms of assembly, homodimer. Zn(2+) serves as cofactor.

The catalysed reaction is Endonucleolytic cleavage of RNA, removing extra 3' nucleotides from tRNA precursor, generating 3' termini of tRNAs. A 3'-hydroxy group is left at the tRNA terminus and a 5'-phosphoryl group is left at the trailer molecule.. In terms of biological role, zinc phosphodiesterase, which displays some tRNA 3'-processing endonuclease activity. Probably involved in tRNA maturation, by removing a 3'-trailer from precursor tRNA. This Metallosphaera sedula (strain ATCC 51363 / DSM 5348 / JCM 9185 / NBRC 15509 / TH2) protein is Ribonuclease Z.